The primary structure comprises 186 residues: Lipoprotein signal peptidase (186 aa).

3 helical membrane-spanning segments follow: residues 11-31 (WIPLFAAGLVVVLDQCAKLLV), 44-64 (VLGDFVRIVHVYNVGAAFSIG), and 70-90 (VLRTLVLGIVPLIIMFLIVFS). Catalysis depends on residues Asp128 and Asp150. The chain crosses the membrane as a helical span at residues 145–165 (AFNIADAVIMTCGLLLIISFI).

Belongs to the peptidase A8 family.

It is found in the cell inner membrane. The enzyme catalyses Release of signal peptides from bacterial membrane prolipoproteins. Hydrolyzes -Xaa-Yaa-Zaa-|-(S,diacylglyceryl)Cys-, in which Xaa is hydrophobic (preferably Leu), and Yaa (Ala or Ser) and Zaa (Gly or Ala) have small, neutral side chains.. It participates in protein modification; lipoprotein biosynthesis (signal peptide cleavage). This protein specifically catalyzes the removal of signal peptides from prolipoproteins. This is Lipoprotein signal peptidase from Treponema pallidum (strain Nichols).